We begin with the raw amino-acid sequence, 61 residues long: Short neurotoxin 2 (61 aa).

Intrachain disulfides connect Cys-3/Cys-23, Cys-17/Cys-40, Cys-42/Cys-53, and Cys-54/Cys-59.

Belongs to the three-finger toxin family. Short-chain subfamily. Type I alpha-neurotoxin sub-subfamily. As to expression, expressed by the venom gland.

The protein resides in the secreted. In terms of biological role, binds to muscle nicotinic acetylcholine receptor (nAChR) and inhibit acetylcholine from binding to the receptor, thereby impairing neuromuscular transmission. This Naja nivea (Cape cobra) protein is Short neurotoxin 2.